A 336-amino-acid polypeptide reads, in one-letter code: 3-isopropylmalate dehydrogenase (336 aa).

Residues R87, R97, R121, and D211 each coordinate substrate. Residues D211, D235, and D239 each contribute to the Mg(2+) site. 271 to 283 (GSAPDIAGQGIAD) contributes to the NAD(+) binding site.

It belongs to the isocitrate and isopropylmalate dehydrogenases family. LeuB type 2 subfamily. As to quaternary structure, homodimer. Mg(2+) is required as a cofactor. Mn(2+) serves as cofactor.

The protein localises to the cytoplasm. It catalyses the reaction (2R,3S)-3-isopropylmalate + NAD(+) = 4-methyl-2-oxopentanoate + CO2 + NADH. Its pathway is amino-acid biosynthesis; L-leucine biosynthesis; L-leucine from 3-methyl-2-oxobutanoate: step 3/4. Functionally, catalyzes the oxidation of 3-carboxy-2-hydroxy-4-methylpentanoate (3-isopropylmalate) to 3-carboxy-4-methyl-2-oxopentanoate. The product decarboxylates to 4-methyl-2 oxopentanoate. The polypeptide is 3-isopropylmalate dehydrogenase (Rhodococcus opacus (strain B4)).